We begin with the raw amino-acid sequence, 65 residues long: Toxin VmKTx1 (65 aa).

The signal sequence occupies residues 1 to 21 (MKTSCLLTILLLSFLVAVAVA). Residues 22 to 28 (EGERSAR) constitute a propeptide that is removed on maturation. 4 cysteine pairs are disulfide-bonded: Cys-34-Cys-54, Cys-40-Cys-59, Cys-44-Cys-61, and Cys-49-Cys-64. The residue at position 64 (Cys-64) is a Cysteine amide.

It belongs to the short scorpion toxin superfamily. Potassium channel inhibitor family. Alpha-KTx 23 subfamily. Expressed by the venom gland.

The protein resides in the secreted. In terms of biological role, voltage-gated potassium channel inhibitor. Selectively and reversibly binds (Kd=0.77 nM) and blocks hKv1.3/KCNA3 potassium channels of human T-lymphocytes. Also shows a very weak effect on hKv1.2/KCNA2 (Kd=7.1 uM). Also reduces the fraction of CD40L expressing T cells that are stimulated by alphaCD3/alphaCD28. The protein is Toxin VmKTx1 of Vaejovis mexicanus smithi (Mexican scorpion).